The chain runs to 231 residues: 7-cyano-7-deazaguanine synthase (231 aa).

8 to 18 (FSGGQDSTTCL) is an ATP binding site. Positions 188, 197, 200, and 203 each coordinate Zn(2+).

It belongs to the QueC family. It depends on Zn(2+) as a cofactor.

It catalyses the reaction 7-carboxy-7-deazaguanine + NH4(+) + ATP = 7-cyano-7-deazaguanine + ADP + phosphate + H2O + H(+). It participates in purine metabolism; 7-cyano-7-deazaguanine biosynthesis. Its function is as follows. Catalyzes the ATP-dependent conversion of 7-carboxy-7-deazaguanine (CDG) to 7-cyano-7-deazaguanine (preQ(0)). The polypeptide is 7-cyano-7-deazaguanine synthase (Escherichia coli O157:H7).